The sequence spans 752 residues: DNA helicase/primase complex-associated protein (752 aa).

Belongs to the herpesviridae HEPA family. Associates with the primase and the helicase to form the helicase-primase complex. Interacts with the origin-binding protein. Interacts with the polymerase catalytic subunit.

The protein resides in the host nucleus. In terms of biological role, component of the helicase/primase complex. Unwinds the DNA at the replication forks and generates single-stranded DNA for both leading and lagging strand synthesis. The primase synthesizes short RNA primers on the lagging strand that the polymerase presumably elongates using dNTPs. The primase-associated factor has no known catalytic activity in the complex and may serve to facilitate the formation of the replisome by directly interacting with the origin-binding protein and the polymerase. The chain is DNA helicase/primase complex-associated protein from Homo sapiens (Human).